A 276-amino-acid polypeptide reads, in one-letter code: MNYQHWLSLAAARFTHSDSPKRDAEILLSFVTGKARTYLLAFGETEITAEQLLWLETLANRREQGEPIAYLVGEREFWSLPLSVSSATLIPRPDTECLVEQALARLPAMPCRILDLGTGTGAIALALATERRDCAVIAVDINADAVALARHNAEKLTIDNVCFLQGSWFEPVSGRFALIASNPPYIDANDPHLNEGDVRYEPHSALVAAAEGMADLAAIVSQAPGYLDPGGWLMLEHGWQQANAVQELLKNSGFSAVMTCKDYGNNDRVTLGQWAV.

S-adenosyl-L-methionine is bound by residues 117–121 (GTGTG), Asp140, Trp168, and Asn182. 182–185 (NPPY) provides a ligand contact to substrate.

Belongs to the protein N5-glutamine methyltransferase family. PrmC subfamily.

The enzyme catalyses L-glutaminyl-[peptide chain release factor] + S-adenosyl-L-methionine = N(5)-methyl-L-glutaminyl-[peptide chain release factor] + S-adenosyl-L-homocysteine + H(+). Methylates the class 1 translation termination release factors RF1/PrfA and RF2/PrfB on the glutamine residue of the universally conserved GGQ motif. The chain is Release factor glutamine methyltransferase from Yersinia pestis.